The chain runs to 351 residues: Epoxyqueuosine reductase (351 aa).

The Proton donor role is filled by Asp-131. The region spanning 177–205 (EDQPVDYGCGSCTRCVDFCPTKALLGDGR) is the 4Fe-4S ferredoxin-type domain. [4Fe-4S] cluster is bound by residues Cys-185, Cys-188, Cys-191, Cys-195, Cys-211, Cys-237, Cys-240, and Cys-244.

It belongs to the QueG family. In terms of assembly, monomer. It depends on cob(II)alamin as a cofactor. The cofactor is [4Fe-4S] cluster.

Its subcellular location is the cytoplasm. The enzyme catalyses epoxyqueuosine(34) in tRNA + AH2 = queuosine(34) in tRNA + A + H2O. The protein operates within tRNA modification; tRNA-queuosine biosynthesis. Functionally, catalyzes the conversion of epoxyqueuosine (oQ) to queuosine (Q), which is a hypermodified base found in the wobble positions of tRNA(Asp), tRNA(Asn), tRNA(His) and tRNA(Tyr). The polypeptide is Epoxyqueuosine reductase (Lactococcus garvieae (strain Lg2) (Enterococcus seriolicida)).